The sequence spans 1321 residues: Bile salt export pump (1321 aa).

The Cytoplasmic segment spans residues 1–62 (MSDSVILRSV…FSSSKDIWLM (62 aa)). The ABC transmembrane type-1 1 domain maps to 62-385 (MLMGGVCALL…ASSCLEIFST (324 aa)). The helical transmembrane segment at 63-83 (LMGGVCALLHGMAQPGILIIF) threads the bilayer. Residues 84-147 (GIMTDIFIKY…MIKFSGIYAG (64 aa)) lie on the Extracellular side of the membrane. Residues asparagine 109, asparagine 116, asparagine 122, and asparagine 125 are each glycosylated (N-linked (GlcNAc...) asparagine). Residues 148–168 (VGMTVLILGYFQIRLWVITGA) traverse the membrane as a helical segment. The Cytoplasmic segment spans residues 169–215 (RQIRRMRKIYFRRIMRMEIGWFDCTSVGELNSRFADDIEKINDAIAD). The helical transmembrane segment at 216–236 (QLAHFLQRMSTAMCGLLLGFY) threads the bilayer. Residues 237-240 (RGWK) are Extracellular-facing. The helical transmembrane segment at 241–261 (LTLVILAVSPLIGIGAAVIGL) threads the bilayer. Topologically, residues 262–319 (SIAKFTELELKAYAKAGSIADEVLSSIRTVAAFGGENKEVERYEKNLVFAQRWGIWKG) are cytoplasmic. Residues 320–340 (MVMGFFTGYMWCLIFFCYALA) form a helical membrane-spanning segment. Residues 341–353 (FWYGSTLVLDEEE) are Extracellular-facing. A helical membrane pass occupies residues 354-374 (YTPGTLVQIFLCVILAAMNIG). Over 375–755 (HASSCLEIFS…KYNIPEWHYI (381 aa)) the chain is Cytoplasmic. One can recognise an ABC transporter 1 domain in the interval 420–656 (IEFHNVTFHY…KGVYFMLVTL (237 aa)). 455-462 (GSSGAGKS) contributes to the ATP binding site. Threonine 586 carries the post-translational modification Phosphothreonine. Serine 587 is modified (phosphoserine). The tract at residues 651-674 (FMLVTLQSQGDNAHKETSIMGKDA) is interaction with HAX1. Phosphoserine occurs at positions 692, 703, and 706. The ABC transmembrane type-1 2 domain maps to 755-1043 (ILVGSLSAAI…TFSYTPSYAK (289 aa)). A helical transmembrane segment spans residues 756-776 (LVGSLSAAINGAVTPIYSLLF). Over 777 to 794 (SQLLGTFSLLDKEQQRSE) the chain is Extracellular. A helical membrane pass occupies residues 795-815 (IHSMCLFFVILGCVSIFTQFL). Residues 816–869 (QGYTFAKSGELLTKRLRKFGFKAMLGQDIGWFDDLRNNPGVLTTRLATDASQVQ) lie on the Cytoplasmic side of the membrane. 2 helical membrane-spanning segments follow: residues 870–890 (GATG…IAAL) and 891–911 (LIAF…FPFL). The Cytoplasmic portion of the chain corresponds to 912–979 (ALSGAVQTKM…SYKTAVRKAN (68 aa)). The chain crosses the membrane as a helical span at residues 980 to 1000 (IYGLCFAFSQGIAFLANSAAY). The Extracellular segment spans residues 1001–1011 (RYGGYLIAYEG). Residues 1012 to 1032 (LGFSHVFRVVSSVALSATAVG) traverse the membrane as a helical segment. Residues 1033-1321 (RTFSYTPSYA…KLVITGAPIS (289 aa)) are Cytoplasmic-facing. The region spanning 1078–1316 (IDFIDCKFTY…KGAYYKLVIT (239 aa)) is the ABC transporter 2 domain. Position 1113–1120 (1113–1120 (GSSGCGKS)) interacts with ATP. Serine 1321 is subject to Phosphoserine.

The protein belongs to the ABC transporter superfamily. ABCB family. Multidrug resistance exporter (TC 3.A.1.201) subfamily. In terms of assembly, interacts with HAX1. Interacts with the adapter protein complex 2 (AP-2) throught AP2A2 or AP2A1; this interaction regulates cell membrane expression of ABCB11 through its internalization in a clathrin-dependent manner and its subsequent degradation. Post-translationally, ubiquitinated; short-chain ubiquitination regulates cell-Surface expression of ABCB11. In terms of processing, N-glycosylated. As to expression, expressed predominantly, if not exclusively in the liver, where it was further localized to the canalicular microvilli and to subcanalicular vesicles of the hepatocytes by in situ.

Its subcellular location is the apical cell membrane. It localises to the recycling endosome membrane. It is found in the endosome. The protein resides in the cell membrane. It carries out the reaction cholate(in) + ATP + H2O = cholate(out) + ADP + phosphate + H(+). It catalyses the reaction taurocholate(in) + ATP + H2O = taurocholate(out) + ADP + phosphate + H(+). The enzyme catalyses glycocholate(in) + ATP + H2O = glycocholate(out) + ADP + phosphate + H(+). The catalysed reaction is glycochenodeoxycholate(in) + ATP + H2O = glycochenodeoxycholate(out) + ADP + phosphate + H(+). It carries out the reaction taurochenodeoxycholate(in) + ATP + H2O = taurochenodeoxycholate(out) + ADP + phosphate + H(+). It catalyses the reaction glycoursodeoxycholate(in) + ATP + H2O = glycoursodeoxycholate(out) + ADP + phosphate + H(+). The enzyme catalyses tauroursodeoxycholate(in) + ATP + H2O = tauroursodeoxycholate(out) + ADP + phosphate + H(+). The catalysed reaction is taurodeoxycholate(in) + ATP + H2O = taurodeoxycholate(out) + ADP + phosphate + H(+). It carries out the reaction pravastatin(in) + ATP + H2O = pravastatin(out) + ADP + phosphate + H(+). With respect to regulation, the uptake of taurocholate is inhibited by taurolithocholate sulfate with an IC(50) of 52.9 uM. Pravastatin competitively inhibits the transport of taurocholic acid. Cyclosporin A, glibenclamide, rifampicin and troglitazonestrongly competitively inhibit the transport activity of taurocholate. The canalicular transport activity of taurocholate is strongly dependent on canalicular membrane cholesterol content. The uptake of taurocholate is increased by short- and medium-chain fatty acids. Cholesterol increases transport capacity of taurocholate without affecting the affinity for the substrate. Functionally, catalyzes the transport of the major hydrophobic bile salts, such as taurine and glycine-conjugated cholic acid across the canalicular membrane of hepatocytes in an ATP-dependent manner, therefore participates in hepatic bile acid homeostasis and consequently to lipid homeostasis through regulation of biliary lipid secretion in a bile salts dependent manner. Transports taurine-conjugated bile salts more rapidly than glycine-conjugated bile salts. Also transports non-bile acid compounds, such as pravastatin and fexofenadine in an ATP-dependent manner and may be involved in their biliary excretion. The sequence is that of Bile salt export pump from Rattus norvegicus (Rat).